We begin with the raw amino-acid sequence, 154 residues long: Ribonuclease HI (154 aa).

The RNase H type-1 domain occupies 1 to 142 (MPKQIEIFTD…CDELAKKGAE (142 aa)). Mg(2+) contacts are provided by aspartate 10, glutamate 48, aspartate 70, and aspartate 134.

It belongs to the RNase H family. Monomer. Requires Mg(2+) as cofactor.

It localises to the cytoplasm. The enzyme catalyses Endonucleolytic cleavage to 5'-phosphomonoester.. Its function is as follows. Endonuclease that specifically degrades the RNA of RNA-DNA hybrids. The sequence is that of Ribonuclease HI (rnhA) from Haemophilus influenzae (strain ATCC 51907 / DSM 11121 / KW20 / Rd).